A 160-amino-acid chain; its full sequence is Arginine repressor (160 aa).

Belongs to the ArgR family.

Its subcellular location is the cytoplasm. It functions in the pathway amino-acid biosynthesis; L-arginine biosynthesis [regulation]. Regulates arginine biosynthesis genes. The polypeptide is Arginine repressor (Anaeromyxobacter dehalogenans (strain 2CP-1 / ATCC BAA-258)).